Consider the following 386-residue polypeptide: Bifunctional desaturase/conjugase FADX (386 aa).

A disordered region spans residues 1 to 28 (MGAGGRMSVAPNNSKCEKKESRSVKRVP). A run of 2 helical transmembrane segments spans residues 65 to 85 (LSFIFYSIATTYFHLLPSPIT) and 87 to 107 (IAWPVYWAFQGCILTSVWVLG). The short motif at 108–112 (HECGH) is the Histidine box-1 element. The short motif at 144 to 148 (HRRHH) is the Histidine box-2 element. 3 consecutive transmembrane segments (helical) span residues 182–202 (ALTLVATLFIGWPLYLAFNVS), 228–248 (IYISDAMIFVAAYVLYKIAMA), and 250–270 (GLAWLVCIYGVPLLIVNALVV). Positions 318-322 (HVIHH) match the Histidine box-3 motif.

Belongs to the fatty acid desaturase type 1 family. Expressed exclusively in developing seeds.

The protein resides in the endoplasmic reticulum membrane. It catalyses the reaction a (9Z,12Z)-octadecadienoyl-containing glycerolipid + 2 Fe(II)-[cytochrome b5] + O2 + 2 H(+) = a (9Z,11E,13E)-octadecatrienoyl-containing glycerolipid + 2 Fe(III)-[cytochrome b5] + 2 H2O. The enzyme catalyses (9Z,12Z,15Z)-octadecatrienoyl-containing glycerolipid + 2 Fe(II)-[cytochrome b5] + O2 + 2 H(+) = a (9Z,11E,13E,15Z)-octadecatetraenoyl-containing glycerolipid + 2 Fe(III)-[cytochrome b5] + 2 H2O. It carries out the reaction a (9Z)-octadecenoyl-containing glycerolipid + 2 Fe(II)-[cytochrome b5] + O2 + 2 H(+) = a (9Z,12E)-octadecadienoyl-containing glycerolipid + 2 Fe(III)-[cytochrome b5] + 2 H2O. The catalysed reaction is a (9Z)-hexadecenoyl-containing glycerolipid + 2 Fe(II)-[cytochrome b5] + O2 + 2 H(+) = a (9Z,12E)-hexadecadienoyl-containing glycerolipid + 2 Fe(III)-[cytochrome b5] + 2 H2O. Its pathway is lipid metabolism; polyunsaturated fatty acid biosynthesis. Functionally, converts linoleic acid to alpha-eleostearic acid (18:3(9Z,11E,13E)) and alpha-linolenic acid to alpha-parinaric acid (18:4(9Z,11E,13E,15Z)). Converts a single cis double bond at carbon 12 to two conjugated trans bonds at positions 11 and 13. Can also act as a 12(E) desaturase when acting on the monounsaturated fatty acids oleate and palmitoleate, stereoselectively introducing a trans double bond. This is Bifunctional desaturase/conjugase FADX from Vernicia fordii (Tung).